Reading from the N-terminus, the 513-residue chain is RNA-splicing ligase RtcB homolog (513 aa).

Residues Asp127, Cys130, His235, His267, and His361 each contribute to the Mn(2+) site. Residue 234–238 coordinates GMP; that stretch reads NHYAE. Residues 361 to 362, 410 to 413, Ser417, 436 to 439, and Lys512 contribute to the GMP site; these read HN, GGTM, and HGAG. His436 serves as the catalytic GMP-histidine intermediate.

This sequence belongs to the RtcB family. As to quaternary structure, catalytic component of the tRNA-splicing ligase complex. It depends on Mn(2+) as a cofactor.

The catalysed reaction is a 3'-end 3'-phospho-ribonucleotide-RNA + a 5'-end dephospho-ribonucleoside-RNA + GTP = a ribonucleotidyl-ribonucleotide-RNA + GMP + diphosphate. The enzyme catalyses a 3'-end 2',3'-cyclophospho-ribonucleotide-RNA + a 5'-end dephospho-ribonucleoside-RNA + GTP + H2O = a ribonucleotidyl-ribonucleotide-RNA + GMP + diphosphate + H(+). Functionally, catalytic subunit of the tRNA-splicing ligase complex that acts by directly joining spliced tRNA halves to mature-sized tRNAs by incorporating the precursor-derived splice junction phosphate into the mature tRNA as a canonical 3',5'-phosphodiester. May act as an RNA ligase with broad substrate specificity, and may function toward other RNAs. The protein is RNA-splicing ligase RtcB homolog of Micromonas commoda (strain RCC299 / NOUM17 / CCMP2709) (Picoplanktonic green alga).